The following is a 359-amino-acid chain: Outer membrane protein A (359 aa).

A signal peptide spans 1–21; sequence MKKTAIALAVALAGFATVAQA. 8 consecutive transmembrane segments (beta stranded) span residues 27–37, 62–73, 77–85, 103–114, 119–127, 154–163, 168–175, and 194–202; these read TWYTGAKLGWS, QLGAGAFLGYQA, LGFELGYDW, QGVQLAAKLSYP, LDIYTRLGG, PLAAVGVEYA, WATRLDYQ, and MLSLGVSYR. A run of 5 repeats spans residues 210 to 211, 212 to 213, 214 to 215, 216 to 217, and 218 to 219. The 5 X 2 AA tandem repeats of A-P stretch occupies residues 210 to 219; that stretch reads APAPAPAPAP. The OmpA-like domain occupies 221–351; the sequence is VETKRFTLKS…RVEIEVKGIK (131 aa). Cys-322 and Cys-336 are joined by a disulfide.

Belongs to the outer membrane OOP (TC 1.B.6) superfamily. OmpA family. Monomer and homodimer.

The protein resides in the cell outer membrane. In terms of biological role, with TolR probably plays a role in maintaining the position of the peptidoglycan cell wall in the periplasm. Acts as a porin with low permeability that allows slow penetration of small solutes; an internal gate slows down solute passage. This Serratia marcescens protein is Outer membrane protein A.